A 471-amino-acid chain; its full sequence is Glutamate--tRNA ligase (471 aa).

A 'HIGH' region motif is present at residues 9–19 (PSPTGFLHVGG). Zn(2+)-binding residues include Cys-98, Cys-100, Cys-125, and Asp-127. A 'KMSKS' region motif is present at residues 237 to 241 (KLSKR). Residue Lys-240 coordinates ATP.

The protein belongs to the class-I aminoacyl-tRNA synthetase family. Glutamate--tRNA ligase type 1 subfamily. In terms of assembly, monomer. Zn(2+) is required as a cofactor.

The protein resides in the cytoplasm. It carries out the reaction tRNA(Glu) + L-glutamate + ATP = L-glutamyl-tRNA(Glu) + AMP + diphosphate. Its function is as follows. Catalyzes the attachment of glutamate to tRNA(Glu) in a two-step reaction: glutamate is first activated by ATP to form Glu-AMP and then transferred to the acceptor end of tRNA(Glu). The sequence is that of Glutamate--tRNA ligase from Aeromonas salmonicida (strain A449).